A 471-amino-acid chain; its full sequence is BPI fold-containing family B member 1 (471 aa).

Residues 1–18 (MTNPWIVSLLLGATLVQA) form the signal peptide. 4 N-linked (GlcNAc...) asparagine glycosylation sites follow: asparagine 150, asparagine 157, asparagine 260, and asparagine 397. The cysteines at positions 154 and 197 are disulfide-linked.

Belongs to the BPI/LBP/Plunc superfamily. Plunc family.

The protein resides in the secreted. May play a role in innate immunity in mouth, nose and lungs. Binds bacterial lipopolysaccharide (LPS) and modulates the cellular responses to LPS. The protein is BPI fold-containing family B member 1 (Bpifb1) of Rattus norvegicus (Rat).